The chain runs to 104 residues: UPF0145 protein GTNG_1265 (104 aa).

This sequence belongs to the UPF0145 family.

This chain is UPF0145 protein GTNG_1265, found in Geobacillus thermodenitrificans (strain NG80-2).